Consider the following 75-residue polypeptide: Small ribosomal subunit protein bS18 (75 aa).

It belongs to the bacterial ribosomal protein bS18 family. In terms of assembly, part of the 30S ribosomal subunit. Forms a tight heterodimer with protein bS6.

Its function is as follows. Binds as a heterodimer with protein bS6 to the central domain of the 16S rRNA, where it helps stabilize the platform of the 30S subunit. The protein is Small ribosomal subunit protein bS18 of Pasteurella multocida (strain Pm70).